Here is a 387-residue protein sequence, read N- to C-terminus: Proline-rich protein 5 (387 aa).

2 interaction with RICTOR regions span residues 10–96 and 189–219; these read MSSP…LTKG and HESR…YGLY. Residues 13 to 34 form a disordered region; sequence PSLSDLGKREPGAAGTDERGTQ. A compositionally biased stretch (basic and acidic residues) spans 18-33; sequence LGKREPGAAGTDERGT. Serine 253 is subject to Phosphoserine. The segment at 262 to 387 is disordered; the sequence is NPVAEHEAEG…EAPGGRPSVV (126 aa). Polar residues predominate over residues 305-314; sequence SGTFRSSPTP. Serine 373 is subject to Phosphoserine.

The protein belongs to the PROTOR family. As to quaternary structure, associated component of the mechanistic target of rapamycin complex 2 (mTORC2). Binds directly to MTOR and RICTOR within the TORC2 complex. As to expression, ubiquitously expressed. Expressed at high levels in kidney.

Its function is as follows. Associated subunit of mTORC2, which regulates cell growth and survival in response to hormonal signals. mTORC2 is activated by growth factors, but, in contrast to mTORC1, seems to be nutrient-insensitive. mTORC2 seems to function upstream of Rho GTPases to regulate the actin cytoskeleton, probably by activating one or more Rho-type guanine nucleotide exchange factors. PRR5 plays an important role in regulation of PDGFRB expression and in modulation of platelet-derived growth factor signaling. May act as a tumor suppressor in breast cancer. The polypeptide is Proline-rich protein 5 (Mus musculus (Mouse)).